Consider the following 477-residue polypeptide: Ubiquitin carboxyl-terminal hydrolase 7 (477 aa).

The Ubiquitin-like domain maps to 2 to 77 (LTVSVKWQKK…LMMMGTADEI (76 aa)). Positions 104 to 473 (AGLVNLGNTC…MAYIVMYKAR (370 aa)) constitute a USP domain. Cys113 (nucleophile) is an active-site residue. The calmodulin-binding stretch occupies residues 171–190 (MPFWMVLQKKYPQFAQLHNG). Residues 364–401 (QASAKSSSKGDDVKMTDAEGSSNQSGESSTGDQQEGAS) are disordered. Positions 371–380 (SKGDDVKMTD) are enriched in basic and acidic residues. Residues 382-399 (EGSSNQSGESSTGDQQEG) show a composition bias toward polar residues. His425 serves as the catalytic Proton acceptor.

It belongs to the peptidase C19 family. As to quaternary structure, interacts with calmodulin (CaM).

It catalyses the reaction Thiol-dependent hydrolysis of ester, thioester, amide, peptide and isopeptide bonds formed by the C-terminal Gly of ubiquitin (a 76-residue protein attached to proteins as an intracellular targeting signal).. In terms of biological role, recognizes and hydrolyzes the peptide bond at the C-terminal Gly of ubiquitin. Involved in the processing of poly-ubiquitin precursors as well as that of ubiquitinated proteins. This Arabidopsis thaliana (Mouse-ear cress) protein is Ubiquitin carboxyl-terminal hydrolase 7 (UBP7).